Here is a 732-residue protein sequence, read N- to C-terminus: S-adenosyl-L-methionine-dependent tRNA 4-demethylwyosine synthase TYW1 (732 aa).

Positions 79-237 constitute a Flavodoxin-like domain; it reads VKIFYGSQTG…DFRAWKTKFI (159 aa). Residues 85 to 89 and 176 to 208 each bind FMN; these read SQTGT and VFGLGNSAYASHFNKVGKNVDKWLWMLGAHRVM. The segment at 248 to 314 is disordered; that stretch reads RKKSCGGHCK…HQSLNSIVDV (67 aa). The segment covering 259–286 has biased composition (basic and acidic residues); sequence GKCESHQHGSEEREEGSHEQDELHHRDT. Acidic residues predominate over residues 287 to 301; that stretch reads EEEEPFESSSEEEFG. The Radical SAM core domain occupies 400–644; it reads YGIESHRCME…VDLIPEYEIA (245 aa). Cys-416, Cys-420, and Cys-423 together coordinate [4Fe-4S] cluster.

The protein belongs to the TYW1 family. It depends on [4Fe-4S] cluster as a cofactor.

The catalysed reaction is N(1)-methylguanosine(37) in tRNA(Phe) + pyruvate + S-adenosyl-L-methionine = 4-demethylwyosine(37) in tRNA(Phe) + 5'-deoxyadenosine + L-methionine + CO2 + H2O. It participates in tRNA modification; wybutosine-tRNA(Phe) biosynthesis. Functionally, probable component of the wybutosine biosynthesis pathway. Wybutosine is a hyper modified guanosine with a tricyclic base found at the 3'-position adjacent to the anticodon of eukaryotic phenylalanine tRNA. Catalyzes the condensation of N-methylguanine with 2 carbon atoms from pyruvate to form the tricyclic 4-demethylwyosine, an intermediate in wybutosine biosynthesis. In Homo sapiens (Human), this protein is S-adenosyl-L-methionine-dependent tRNA 4-demethylwyosine synthase TYW1 (TYW1).